A 1209-amino-acid polypeptide reads, in one-letter code: Limbin (1209 aa).

Residues 1–200 (MKFSKEIEVF…VLPNHGLHAA (200 aa)) lie on the Extracellular side of the membrane. N-linked (GlcNAc...) asparagine glycosylation occurs at Asn120. The helical transmembrane segment at 201-221 (GFCVAFILSLVLTWAVLFFMV) threads the bilayer. Over 222–1209 (RYQCVKGSSL…KKAAWALGLN (988 aa)) the chain is Cytoplasmic. Coiled coils occupy residues 355–394 (TAEC…SAVE), 553–697 (KQKL…EERD), and 920–1012 (ELQE…METD). Over residues 689 to 700 (ERLEGEERDRGQ) the composition is skewed to basic and acidic residues. The disordered stretch occupies residues 689-714 (ERLEGEERDRGQEGVQSVRQRLKDDA).

In terms of assembly, component of the EvC complex composed of EFCAB7, IQCE, EVC2 and EVC; built from two subcomplexes, EVC2:EVC and EFCAB7:IQCE. Interacts with EVC. Interacts (via N-terminal end) with EFCAB7. Interacts (via N-terminal end) with IQCE.

It is found in the cell membrane. It localises to the cytoplasm. The protein resides in the cytoskeleton. Its subcellular location is the cilium basal body. The protein localises to the cell projection. It is found in the cilium. It localises to the cilium membrane. The protein resides in the nucleus. In terms of biological role, component of the EvC complex that positively regulates ciliary Hedgehog (Hh) signaling. Plays a critical role in bone formation and skeletal development. May be involved in early embryonic morphogenesis. The chain is Limbin (EVC2) from Bos taurus (Bovine).